Here is a 108-residue protein sequence, read N- to C-terminus: PTS system fructose-like EIIB component 1 (108 aa).

In terms of domain architecture, PTS EIIB type-2 spans Met1–Ala104. Cys11 serves as the catalytic Phosphocysteine intermediate. Cys11 bears the Phosphocysteine; by EIIA mark.

Its subcellular location is the cytoplasm. It catalyses the reaction D-fructose(out) + N(pros)-phospho-L-histidyl-[protein] = D-fructose 1-phosphate(in) + L-histidyl-[protein]. Its function is as follows. The phosphoenolpyruvate-dependent sugar phosphotransferase system (sugar PTS), a major carbohydrate active transport system, catalyzes the phosphorylation of incoming sugar substrates concomitantly with their translocation across the cell membrane. The enzyme II FryABC PTS system is involved in fructose transport. The chain is PTS system fructose-like EIIB component 1 (fryB) from Escherichia coli O157:H7.